We begin with the raw amino-acid sequence, 213 residues long: MDEFKQLDLKKREIENRLNELEGVLLKERVTMDTPLLTEDGFPRSDIDVPSIRTARHEIITLRNDHRELEDQIKKVLEKVFSGFSKESLAANDETKLAQEADPLNFNAANYNMNDIISRSKILGRVKPFCVVDSVAVESPAQEAGLCIGDELVHVQNVTSLSELPTFISNNVNKTLDVLLIRGYSADGSTNLVELKLTPHKWQGPGLLGCHLR.

A coiled-coil region spans residues 1-82 (MDEFKQLDLK…IKKVLEKVFS (82 aa)). The PDZ domain occupies 120-184 (SKILGRVKPF…TLDVLLIRGY (65 aa)).

The protein localises to the cytoplasm. The protein resides in the nucleus. Functionally, acts as a chaperone during the assembly of the 26S proteasome, specifically of the base subcomplex of the 19S regulatory complex (RC). The polypeptide is Probable 26S proteasome regulatory subunit p27 (nas2) (Schizosaccharomyces pombe (strain 972 / ATCC 24843) (Fission yeast)).